Consider the following 140-residue polypeptide: MAIERTFSILKPDATARNLTGAINAVIEEAGLRIVAQRRIRMSEAQAKTFYEVHAERPFYGELVSFMTSGPVVVQVLEGDNAVAKYREVMGATNPAQAAEGTIRKRFAVSVGENSVHGSDSAENAAIEIAQFFTEADIVG.

Residues lysine 11, phenylalanine 59, arginine 87, threonine 93, arginine 104, and asparagine 114 each coordinate ATP. Histidine 117 acts as the Pros-phosphohistidine intermediate in catalysis.

It belongs to the NDK family. Homotetramer. Mg(2+) is required as a cofactor.

The protein resides in the cytoplasm. The catalysed reaction is a 2'-deoxyribonucleoside 5'-diphosphate + ATP = a 2'-deoxyribonucleoside 5'-triphosphate + ADP. It catalyses the reaction a ribonucleoside 5'-diphosphate + ATP = a ribonucleoside 5'-triphosphate + ADP. Its function is as follows. Major role in the synthesis of nucleoside triphosphates other than ATP. The ATP gamma phosphate is transferred to the NDP beta phosphate via a ping-pong mechanism, using a phosphorylated active-site intermediate. This chain is Nucleoside diphosphate kinase, found in Methylobacterium sp. (strain 4-46).